Reading from the N-terminus, the 264-residue chain is Orotidine 5'-phosphate decarboxylase (264 aa).

Substrate is bound by residues aspartate 37, lysine 59–histidine 61, aspartate 91–threonine 100, tyrosine 217, and arginine 235. The active-site Proton donor is the lysine 93.

The protein belongs to the OMP decarboxylase family.

It carries out the reaction orotidine 5'-phosphate + H(+) = UMP + CO2. It functions in the pathway pyrimidine metabolism; UMP biosynthesis via de novo pathway; UMP from orotate: step 2/2. The protein is Orotidine 5'-phosphate decarboxylase (URA3) of Torulaspora delbrueckii (Yeast).